Consider the following 153-residue polypeptide: UPF0756 membrane protein LCA_1031 (153 aa).

A run of 4 helical transmembrane segments spans residues 4–24 (WLFL…SLII), 52–72 (WGVT…QIGF), 85–105 (FIAV…VGLL), and 115–135 (LVFG…GPVI).

It belongs to the UPF0756 family.

It is found in the cell membrane. The polypeptide is UPF0756 membrane protein LCA_1031 (Latilactobacillus sakei subsp. sakei (strain 23K) (Lactobacillus sakei subsp. sakei)).